The sequence spans 97 residues: MANIKSAIKRIQIAERNRLRNKSYKSAVKTLMKKYYAAVEDYKANPSEEAKKAVDQAMSAAYSKIDKAVKCRILHRNNGARKKSQLANALKQVTTAS.

The protein belongs to the bacterial ribosomal protein bS20 family.

Binds directly to 16S ribosomal RNA. The chain is Small ribosomal subunit protein bS20 from Gloeothece citriformis (strain PCC 7424) (Cyanothece sp. (strain PCC 7424)).